Reading from the N-terminus, the 128-residue chain is UPF0325 protein KPN78578_01770 (128 aa).

Belongs to the UPF0325 family.

The sequence is that of UPF0325 protein KPN78578_01770 from Klebsiella pneumoniae subsp. pneumoniae (strain ATCC 700721 / MGH 78578).